The chain runs to 193 residues: NADH-quinone oxidoreductase subunit B (193 aa).

Residues Cys72, Cys73, Cys137, and Cys167 each coordinate [4Fe-4S] cluster.

It belongs to the complex I 20 kDa subunit family. In terms of assembly, NDH-1 is composed of 14 different subunits. Subunits NuoB, C, D, E, F, and G constitute the peripheral sector of the complex. Requires [4Fe-4S] cluster as cofactor.

The protein resides in the cell inner membrane. The enzyme catalyses a quinone + NADH + 5 H(+)(in) = a quinol + NAD(+) + 4 H(+)(out). Its function is as follows. NDH-1 shuttles electrons from NADH, via FMN and iron-sulfur (Fe-S) centers, to quinones in the respiratory chain. Couples the redox reaction to proton translocation (for every two electrons transferred, four hydrogen ions are translocated across the cytoplasmic membrane), and thus conserves the redox energy in a proton gradient. The sequence is that of NADH-quinone oxidoreductase subunit B from Brucella anthropi (strain ATCC 49188 / DSM 6882 / CCUG 24695 / JCM 21032 / LMG 3331 / NBRC 15819 / NCTC 12168 / Alc 37) (Ochrobactrum anthropi).